The primary structure comprises 279 residues: Thymidylate synthase (279 aa).

132-133 (RR) is a dUMP binding site. C153 serves as the catalytic Nucleophile. Residues 178–181 (RSND), N189, and 219–221 (HIY) each bind dUMP. Position 181 (D181) interacts with (6R)-5,10-methylene-5,6,7,8-tetrahydrofolate. A278 contributes to the (6R)-5,10-methylene-5,6,7,8-tetrahydrofolate binding site.

This sequence belongs to the thymidylate synthase family. Bacterial-type ThyA subfamily. Homodimer.

It localises to the cytoplasm. The catalysed reaction is dUMP + (6R)-5,10-methylene-5,6,7,8-tetrahydrofolate = 7,8-dihydrofolate + dTMP. Its pathway is pyrimidine metabolism; dTTP biosynthesis. In terms of biological role, catalyzes the reductive methylation of 2'-deoxyuridine-5'-monophosphate (dUMP) to 2'-deoxythymidine-5'-monophosphate (dTMP) while utilizing 5,10-methylenetetrahydrofolate (mTHF) as the methyl donor and reductant in the reaction, yielding dihydrofolate (DHF) as a by-product. This enzymatic reaction provides an intracellular de novo source of dTMP, an essential precursor for DNA biosynthesis. This chain is Thymidylate synthase, found in Lactococcus lactis subsp. lactis (strain IL1403) (Streptococcus lactis).